Reading from the N-terminus, the 853-residue chain is Lysine-specific histone demethylase 1A (853 aa).

The segment at 1–177 (MLSGKKAAAA…EPEEPSGVEG (177 aa)) is disordered. The span at 7–26 (AAAAAAAAAAAAAAGTEAGS) shows a compositional bias: low complexity. T60 carries the post-translational modification Phosphothreonine. A compositionally biased stretch (low complexity) spans 76–97 (AEPPGSAGPQAGPTAGPGSATP). The residue at position 105 (T105) is a Phosphothreonine. The stretch at 111–152 (TSRRKRAKVEYREMDESLANLSEDEYYSEEERNAKAEKEKKL) forms a coiled coil. S127 and S132 each carry phosphoserine. The residue at position 136 (Y136) is a Phosphotyrosine. S138 carries the post-translational modification Phosphoserine. The span at 139–152 (EEERNAKAEKEKKL) shows a compositional bias: basic and acidic residues. Residues 161 to 173 (PEEENESEPEEPS) are compositionally biased toward acidic residues. Phosphoserine is present on S167. Residues 175-274 (VEGAAFQSRL…FGIYKRIKPL (100 aa)) form the SWIRM domain. Residues S290, E309, R311, R317, and 333 to 334 (MV) each bind FAD. Residues 301–853 (FGMDVTLLEA…GVPAQQSPSM (553 aa)) are demethylase activity. Positions 429 to 515 (IEHWKKIVKT…EEKLQELEAN (87 aa)) form a coiled coil. An N6-acetyllysine mark is found at K433, K434, and K437. Glycyl lysine isopeptide (Lys-Gly) (interchain with G-Cter in SUMO2) cross-links involve residues K443 and K470. K504 participates in a covalent cross-link: Glycyl lysine isopeptide (Lys-Gly) (interchain with G-Cter in ubiquitin). A Phosphoserine modification is found at S612. FAD contacts are provided by residues E802 and 811 to 812 (TV). S850 carries the phosphoserine modification.

The protein belongs to the flavin monoamine oxidase family. Component of a histone demethylase complex with RCOR1. Component of a BHC histone deacetylase complex that contains HDAC1, HDAC2, HMG20B, KDM1A, RCOR1 and PHF21A. The BHC complex may also contain ZMYM2, ZNF217, ZMYM3, GSE1 and GTF2I. In the complex, RCOR1 strongly enhances the demethylase activity and protects it from the proteasome while PHF21A inhibits the demethylase activity. Interacts with the androgen receptor (AR). Component of a RCOR/GFI/KDM1A/HDAC complex. Interacts directly with GFI1 and GFI1B. Interacts with SNAI1 (via SNAG domain). Interacts with INSM1. Interacts (via AOD/Tower domain) with JADE2 (via C-terminus). Interacts with ESRRB; co-occupes the core set of ESRRB targets. Interacts with SAMD1 (via WH domain); the interaction modulates KDM1A function. Interacts with RBPJ. Interacts with L3MBTL3. Interacts with ZMYND8. The cofactor is FAD. In terms of processing, acetylated by KAT8 in epithelial but not in mesenchymal cells, thereby regulating the epithelial-to-mesenchymal transition. Acetylation by KAT8 reduces KDM1A association with nucleosomes, thereby decreasing histone H3 demethylation, leading to transcription activatio of target genes. Post-translationally, polyubiquitinated by JADE2; which leads to its proteasomal degradation. Deubiquitinated by USP38; preventing it from degradation by the 26S proteasome. As to expression, ubiquitously expressed.

It is found in the nucleus. The protein resides in the chromosome. The enzyme catalyses N(6),N(6)-dimethyl-L-lysyl(4)-[histone H3] + 2 A + 2 H2O = L-lysyl(4)-[histone H3] + 2 formaldehyde + 2 AH2. With respect to regulation, the N-terminal sequences of INSM1 and SNAI1 compete with histone H3 for the same binding site and thereby inhibit histone demethylation (in vitro). In terms of biological role, histone demethylase that can demethylate both 'Lys-4' (H3K4me) and 'Lys-9' (H3K9me) of histone H3, thereby acting as a coactivator or a corepressor, depending on the context. Acts by oxidizing the substrate by FAD to generate the corresponding imine that is subsequently hydrolyzed. Acts as a corepressor by mediating demethylation of H3K4me, a specific tag for epigenetic transcriptional activation. Demethylates both mono- (H3K4me1) and di-methylated (H3K4me2) H3K4me. May play a role in the repression of neuronal genes. Alone, it is unable to demethylate H3K4me on nucleosomes and requires the presence of RCOR1/CoREST to achieve such activity. Also acts as a coactivator of androgen receptor (ANDR)-dependent transcription, by being recruited to ANDR target genes and mediating demethylation of H3K9me, a specific tag for epigenetic transcriptional repression. The presence of PRKCB in ANDR-containing complexes, which mediates phosphorylation of 'Thr-6' of histone H3 (H3T6ph), a specific tag that prevents demethylation H3K4me, prevents H3K4me demethylase activity of KDM1A. Demethylates di-methylated 'Lys-370' of p53/TP53 which prevents interaction of p53/TP53 with TP53BP1 and represses p53/TP53-mediated transcriptional activation. Demethylates and stabilizes the DNA methylase DNMT1. Demethylates methylated 'Lys-44' and methylated 'Lys-119' of SOX2. Required for gastrulation during embryogenesis. Component of a RCOR/GFI/KDM1A/HDAC complex that suppresses, via histone deacetylase (HDAC) recruitment, a number of genes implicated in multilineage blood cell development. Facilitates epithelial-to-mesenchymal transition by acting as an effector of SNAI1-mediated transcription repression of epithelial markers E-cadherin/CDH1, CDN7 and KRT8. Required for the maintenance of the silenced state of the SNAI1 target genes E-cadherin/CDH1 and CDN7. Required for the repression of GIPR expression. This is Lysine-specific histone demethylase 1A from Mus musculus (Mouse).